The sequence spans 306 residues: Small ribosomal subunit protein uS2 (306 aa).

Residue S2 is modified to N-acetylserine. Laminin-binding stretches follow at residues 161–180 (IPCN…MLAR) and 205–229 (RDPE…EYQG). [DE]-W-[ST] repeat units lie at residues 230-232 (EWT), 245-247 (DWS), 276-278 (DWS), 286-288 (DWS), and 304-306 (EWS). Residues 242–306 (EVADWSEGVQ…EWTGTTTEWS (65 aa)) are laminin-binding. Residues 261–306 (PAERPEIPAAKPAAEDWSSQPASTDDWSAAPTAQASEWTGTTTEWS) are disordered. Over residues 277-306 (WSSQPASTDDWSAAPTAQASEWTGTTTEWS) the composition is skewed to polar residues.

It belongs to the universal ribosomal protein uS2 family. Monomer (37LRP) and homodimer (67LR). Component of the small ribosomal subunit. Mature ribosomes consist of a small (40S) and a large (60S) subunit. The 40S subunit contains about 33 different proteins and 1 molecule of RNA (18S). The 60S subunit contains about 49 different proteins and 3 molecules of RNA (28S, 5.8S and 5S). Interacts with rps21. Interacts with several laminins including at least lamb1. Interacts with mdk. Acylated. Acylation may be a prerequisite for conversion of the monomeric 37 kDa laminin receptor precursor (37LRP) to the mature dimeric 67 kDa laminin receptor (67LR), and may provide a mechanism for membrane association. In terms of processing, cleaved by stromelysin-3 (ST3) at the cell surface. Cleavage by stromelysin-3 may be a mechanism to alter cell-extracellular matrix interactions.

It localises to the cell membrane. The protein resides in the cytoplasm. The protein localises to the nucleus. Required for the assembly and/or stability of the 40S ribosomal subunit. Required for the processing of the 20S rRNA-precursor to mature 18S rRNA in a late step of the maturation of 40S ribosomal subunits. Also functions as a cell surface receptor for laminin. Plays a role in cell adhesion to the basement membrane and in the consequent activation of signaling transduction pathways. May play a role in cell fate determination and tissue morphogenesis. The chain is Small ribosomal subunit protein uS2 (rpsa) from Xenopus tropicalis (Western clawed frog).